We begin with the raw amino-acid sequence, 319 residues long: Serine/threonine-protein phosphatase PP1 isozyme 2 (319 aa).

Positions 61, 63, 89, and 121 each coordinate Mn(2+). Catalysis depends on histidine 122, which acts as the Proton donor. Histidine 170 and histidine 245 together coordinate Mn(2+).

The protein belongs to the PPP phosphatase family. PP-1 subfamily. Requires Mn(2+) as cofactor.

The catalysed reaction is O-phospho-L-seryl-[protein] + H2O = L-seryl-[protein] + phosphate. It carries out the reaction O-phospho-L-threonyl-[protein] + H2O = L-threonyl-[protein] + phosphate. This chain is Serine/threonine-protein phosphatase PP1 isozyme 2, found in Acetabularia peniculus (Green alga).